Here is a 176-residue protein sequence, read N- to C-terminus: MDLPGPIHDFLLVFLGSGLILGGLGVVLLPNPIYSAFSLGLVLVCTSLFYILSNSHFVAAAQLLIYVGAINVLIIFAVMFMNGSEYYKDFHLWTVGDGVTSMVCTSIFVSLITTIPDTSWYGIIWTTKSNQIVEQDLISNSQQIGIHLSTDFFLPFELISIILLVSLIGAITVARQ.

Helical transmembrane passes span 10–30 (FLLV…VLLP), 32–52 (PIYS…FYIL), 61–81 (AQLL…VMFM), 92–112 (LWTV…VSLI), and 152–172 (FFLP…GAIT).

The protein belongs to the complex I subunit 6 family. NDH is composed of at least 16 different subunits, 5 of which are encoded in the nucleus.

The protein resides in the plastid. The protein localises to the chloroplast thylakoid membrane. It catalyses the reaction a plastoquinone + NADH + (n+1) H(+)(in) = a plastoquinol + NAD(+) + n H(+)(out). It carries out the reaction a plastoquinone + NADPH + (n+1) H(+)(in) = a plastoquinol + NADP(+) + n H(+)(out). In terms of biological role, NDH shuttles electrons from NAD(P)H:plastoquinone, via FMN and iron-sulfur (Fe-S) centers, to quinones in the photosynthetic chain and possibly in a chloroplast respiratory chain. The immediate electron acceptor for the enzyme in this species is believed to be plastoquinone. Couples the redox reaction to proton translocation, and thus conserves the redox energy in a proton gradient. This Daucus carota (Wild carrot) protein is NAD(P)H-quinone oxidoreductase subunit 6, chloroplastic (ndhG).